The primary structure comprises 461 residues: Argininosuccinate lyase (461 aa).

Belongs to the lyase 1 family. Argininosuccinate lyase subfamily.

It localises to the cytoplasm. The enzyme catalyses 2-(N(omega)-L-arginino)succinate = fumarate + L-arginine. It participates in amino-acid biosynthesis; L-arginine biosynthesis; L-arginine from L-ornithine and carbamoyl phosphate: step 3/3. The protein is Argininosuccinate lyase of Bacillus subtilis (strain 168).